The chain runs to 171 residues: uncharacterized protein (171 aa).

It to M.jannaschii MJ0417.

This is an uncharacterized protein from Methanocaldococcus jannaschii (strain ATCC 43067 / DSM 2661 / JAL-1 / JCM 10045 / NBRC 100440) (Methanococcus jannaschii).